The sequence spans 235 residues: Small ribosomal subunit protein uS2c (235 aa).

The protein belongs to the universal ribosomal protein uS2 family.

The protein resides in the plastid. Its subcellular location is the chloroplast. This chain is Small ribosomal subunit protein uS2c (rps2), found in Adiantum capillus-veneris (Maidenhair fern).